The primary structure comprises 357 residues: Phosphate acyltransferase (357 aa).

It belongs to the PlsX family. In terms of assembly, homodimer. Probably interacts with PlsY.

The protein resides in the cytoplasm. The catalysed reaction is a fatty acyl-[ACP] + phosphate = an acyl phosphate + holo-[ACP]. It functions in the pathway lipid metabolism; phospholipid metabolism. Catalyzes the reversible formation of acyl-phosphate (acyl-PO(4)) from acyl-[acyl-carrier-protein] (acyl-ACP). This enzyme utilizes acyl-ACP as fatty acyl donor, but not acyl-CoA. The polypeptide is Phosphate acyltransferase (Herminiimonas arsenicoxydans).